Consider the following 484-residue polypeptide: MPGTSVSDLSTATAVDAPALLPLPVARPSAPAVVRGKLYIKTHGCQMNEYDSAKMADVLAASEGLELTDNPEEADVVLVNTCSIREKAQEKVFSQLGRWKALKAGGKPVIIGVGGCVASQEGEAIVKRAPYVDLVFGPQTLHRLPELIRARRESGKSQVDISFPEIEKFDRLPEPRAEGPSAFVSIMEGCSKYCSFCVVPYTRGEEVSRPFEDVLVEVAQLAAQGVREINLLGQNVNAYRGAYGADAGDAAQYADLGLLIRTIAQIEGIGRIRFTTSHPLEFSDSLVDAYRDVPQLANYLHLPVQAGSDRILSAMKRGYTALEFKSRIRKLRAVRPDISISSDFIVGFPGETEADFEKTMKLIEDVGFDQSFSFVYSRRPGTPASDLQDDTPETVKQARLARLQAHISAHAASISQSMVGSVQRVLVEGPSRRDPNELTGKSENMRPVNFPGNPRLIGQFVDVLITEAMSNSLRGRIQLDDSAH.

In terms of domain architecture, MTTase N-terminal spans 36-153; sequence GKLYIKTHGC…LPELIRARRE (118 aa). [4Fe-4S] cluster-binding residues include Cys-45, Cys-82, Cys-116, Cys-190, Cys-194, and Cys-197. The Radical SAM core domain occupies 176–415; the sequence is RAEGPSAFVS…HISAHAASIS (240 aa). Positions 416–479 constitute a TRAM domain; it reads QSMVGSVQRV…SNSLRGRIQL (64 aa). Residues 428–450 are disordered; it reads EGPSRRDPNELTGKSENMRPVNF.

Belongs to the methylthiotransferase family. MiaB subfamily. As to quaternary structure, monomer. It depends on [4Fe-4S] cluster as a cofactor.

Its subcellular location is the cytoplasm. The enzyme catalyses N(6)-dimethylallyladenosine(37) in tRNA + (sulfur carrier)-SH + AH2 + 2 S-adenosyl-L-methionine = 2-methylsulfanyl-N(6)-dimethylallyladenosine(37) in tRNA + (sulfur carrier)-H + 5'-deoxyadenosine + L-methionine + A + S-adenosyl-L-homocysteine + 2 H(+). Functionally, catalyzes the methylthiolation of N6-(dimethylallyl)adenosine (i(6)A), leading to the formation of 2-methylthio-N6-(dimethylallyl)adenosine (ms(2)i(6)A) at position 37 in tRNAs that read codons beginning with uridine. The sequence is that of tRNA-2-methylthio-N(6)-dimethylallyladenosine synthase from Xanthomonas oryzae pv. oryzae (strain MAFF 311018).